The sequence spans 372 residues: Methylthioribose-1-phosphate isomerase 2 (372 aa).

D254 serves as the catalytic Proton donor.

It belongs to the eIF-2B alpha/beta/delta subunits family. MtnA subfamily.

The protein localises to the cytoplasm. Its subcellular location is the nucleus. It catalyses the reaction 5-(methylsulfanyl)-alpha-D-ribose 1-phosphate = 5-(methylsulfanyl)-D-ribulose 1-phosphate. The protein operates within amino-acid biosynthesis; L-methionine biosynthesis via salvage pathway; L-methionine from S-methyl-5-thio-alpha-D-ribose 1-phosphate: step 1/6. Its function is as follows. Catalyzes the interconversion of methylthioribose-1-phosphate (MTR-1-P) into methylthioribulose-1-phosphate (MTRu-1-P). The chain is Methylthioribose-1-phosphate isomerase 2 from Trypanosoma cruzi (strain CL Brener).